A 196-amino-acid polypeptide reads, in one-letter code: SAGA-associated factor 11 homolog (196 aa).

Residues 1–22 (MSAANMPTTTGAQGSGNQVPTT) form a disordered region. The SGF11-type zinc finger occupies 106-127 (CTCPNCDRLVAAARFAPHLEKC). The tract at residues 144 to 196 (TKEGASSAHLHSAGNAGGTDDEDDVDWSSDKRRKKSNQNSRNNGSKKNNGKTF) is disordered. Position 172 is a phosphoserine (Ser172). Residues 180–196 (NQNSRNNGSKKNNGKTF) show a composition bias toward low complexity.

The protein belongs to the SGF11 family. Component of some SAGA transcription coactivator-HAT complexes, at least composed of Ada2b, not/nonstop, Pcaf/Gcn5, Sgf11 and Spt3. Within the SAGA complex, Sgf11, e(y)2, and not/nonstop form an additional subcomplex of SAGA called the DUB module (deubiquitination module). Interacts directly with not/nonstop. Interacts with the AMEX complex component xmas-2. Interacts with Cbp80; important for promoter recruitment of Sgf11 that is not associated with the DUB module.

Its subcellular location is the nucleus. It is found in the nucleoplasm. The protein localises to the cytoplasm. In terms of biological role, component of the transcription regulatory histone acetylation (HAT) complex SAGA, a multiprotein complex that activates transcription by remodeling chromatin and mediating histone acetylation and deubiquitination. Within the SAGA complex, participates in a subcomplex that specifically deubiquitinates histone H2B. The SAGA complex is recruited to specific gene promoters by activators, where it is required for transcription. Required for nuclear receptor-mediated transactivation. Binds independently on SAGA to promoters in an RNA-dependent manner. Binds to mRNA and is essential for total mRNA export from the nucleus. Required to counteract heterochromatin silencing. Controls the development of neuronal connectivity in visual system by being required for accurate axon targeting in the optic lobe. Required for expression of ecdysone-induced genes such as br/broad. In Drosophila yakuba (Fruit fly), this protein is SAGA-associated factor 11 homolog.